A 188-amino-acid chain; its full sequence is ATP synthase subunit b, chloroplastic (188 aa).

The chain crosses the membrane as a helical span at residues 35–57 (LINLAVVIGVLVYFGKGVLTTLL).

The protein belongs to the ATPase B chain family. F-type ATPases have 2 components, F(1) - the catalytic core - and F(0) - the membrane proton channel. F(1) has five subunits: alpha(3), beta(3), gamma(1), delta(1), epsilon(1). F(0) has four main subunits: a(1), b(1), b'(1) and c(10-14). The alpha and beta chains form an alternating ring which encloses part of the gamma chain. F(1) is attached to F(0) by a central stalk formed by the gamma and epsilon chains, while a peripheral stalk is formed by the delta, b and b' chains.

It is found in the plastid. Its subcellular location is the chloroplast thylakoid membrane. F(1)F(0) ATP synthase produces ATP from ADP in the presence of a proton or sodium gradient. F-type ATPases consist of two structural domains, F(1) containing the extramembraneous catalytic core and F(0) containing the membrane proton channel, linked together by a central stalk and a peripheral stalk. During catalysis, ATP synthesis in the catalytic domain of F(1) is coupled via a rotary mechanism of the central stalk subunits to proton translocation. Its function is as follows. Component of the F(0) channel, it forms part of the peripheral stalk, linking F(1) to F(0). This chain is ATP synthase subunit b, chloroplastic, found in Zygnema circumcarinatum (Green alga).